A 240-amino-acid polypeptide reads, in one-letter code: 1-(5-phosphoribosyl)-5-[(5-phosphoribosylamino)methylideneamino] imidazole-4-carboxamide isomerase (240 aa).

Residue Asp8 is the Proton acceptor of the active site. Asp130 (proton donor) is an active-site residue.

It belongs to the HisA/HisF family.

Its subcellular location is the cytoplasm. The catalysed reaction is 1-(5-phospho-beta-D-ribosyl)-5-[(5-phospho-beta-D-ribosylamino)methylideneamino]imidazole-4-carboxamide = 5-[(5-phospho-1-deoxy-D-ribulos-1-ylimino)methylamino]-1-(5-phospho-beta-D-ribosyl)imidazole-4-carboxamide. It functions in the pathway amino-acid biosynthesis; L-histidine biosynthesis; L-histidine from 5-phospho-alpha-D-ribose 1-diphosphate: step 4/9. The sequence is that of 1-(5-phosphoribosyl)-5-[(5-phosphoribosylamino)methylideneamino] imidazole-4-carboxamide isomerase from Flavobacterium johnsoniae (strain ATCC 17061 / DSM 2064 / JCM 8514 / BCRC 14874 / CCUG 350202 / NBRC 14942 / NCIMB 11054 / UW101) (Cytophaga johnsonae).